The chain runs to 311 residues: 5'-adenylylsulfate reductase-like 3 (311 aa).

Residues 1 to 22 (MATRLLCWTALLLPIIAATAAA) form the signal peptide. One can recognise a Thioredoxin domain in the interval 23-164 (SPLPEACPVP…LAAFYRDVSG (142 aa)). The N-linked (GlcNAc...) asparagine glycan is linked to Asn139. A helical membrane pass occupies residues 210–230 (LALATAFVILRLLYLLFPKIG). Residues Asn281 and Asn305 are each glycosylated (N-linked (GlcNAc...) asparagine).

The protein resides in the membrane. This chain is 5'-adenylylsulfate reductase-like 3 (APRL3), found in Oryza sativa subsp. japonica (Rice).